We begin with the raw amino-acid sequence, 611 residues long: Dihydroxy-acid dehydratase (611 aa).

A Mg(2+)-binding site is contributed by D81. C122 lines the [2Fe-2S] cluster pocket. Mg(2+) contacts are provided by D123 and K124. K124 bears the N6-carboxylysine mark. C195 is a binding site for [2Fe-2S] cluster. E491 serves as a coordination point for Mg(2+). The Proton acceptor role is filled by S517.

Belongs to the IlvD/Edd family. As to quaternary structure, homodimer. It depends on [2Fe-2S] cluster as a cofactor. Mg(2+) is required as a cofactor.

The catalysed reaction is (2R)-2,3-dihydroxy-3-methylbutanoate = 3-methyl-2-oxobutanoate + H2O. It carries out the reaction (2R,3R)-2,3-dihydroxy-3-methylpentanoate = (S)-3-methyl-2-oxopentanoate + H2O. Its pathway is amino-acid biosynthesis; L-isoleucine biosynthesis; L-isoleucine from 2-oxobutanoate: step 3/4. It functions in the pathway amino-acid biosynthesis; L-valine biosynthesis; L-valine from pyruvate: step 3/4. Its function is as follows. Functions in the biosynthesis of branched-chain amino acids. Catalyzes the dehydration of (2R,3R)-2,3-dihydroxy-3-methylpentanoate (2,3-dihydroxy-3-methylvalerate) into 2-oxo-3-methylpentanoate (2-oxo-3-methylvalerate) and of (2R)-2,3-dihydroxy-3-methylbutanoate (2,3-dihydroxyisovalerate) into 2-oxo-3-methylbutanoate (2-oxoisovalerate), the penultimate precursor to L-isoleucine and L-valine, respectively. This Histophilus somni (strain 2336) (Haemophilus somnus) protein is Dihydroxy-acid dehydratase.